Consider the following 404-residue polypeptide: MFKINDNYLKLPGSYLFSTIGKKVAAYQQANPDKEIIRLGIGDVTQPLAPAVIDALHKSVDEMGHAETFHGYAPDLGYEFLRSAIADHDYKKRGCDISADEIFVSDGAKSDSGNIGDIFSVDNKIAVCDPVYPVYVDTNAMAGRTGDYIPEKQAWSNVVYMPCTAETNFAPELPKETPDIIYLCFPNNPTGSTITKDELQKWVDYANKVGAVIIYDAAYEAYISEPDVPHTIYECEGARTCAIELRSFSKNAGFTGVRLGFTVIPKDLKCGDVTLHSLWARRHGTKFNGAPYIVQRAGEAVYSEAGQKQTGEQIAYYMNNAKTILEGLKSAGYTVSGGVNAPYIWLKTPDKMTSWEFFDYLLEKANVVGTPGSGFGPSGEGYFRLTAFGSYENTVKALERIKAL.

Residues Tyr-15 and Gly-42 each contribute to the substrate site. Residues Tyr-72, 108–109 (AK), Tyr-132, Asn-188, Tyr-219, and 247–249 (SFS) contribute to the pyridoxal 5'-phosphate site. Positions 109, 132, and 188 each coordinate substrate. Lys-250 carries the N6-(pyridoxal phosphate)lysine modification. Residues Arg-258 and Asn-288 each contribute to the pyridoxal 5'-phosphate site. 2 residues coordinate substrate: Asn-288 and Arg-384.

The protein belongs to the class-I pyridoxal-phosphate-dependent aminotransferase family. LL-diaminopimelate aminotransferase subfamily. As to quaternary structure, homodimer. It depends on pyridoxal 5'-phosphate as a cofactor.

It catalyses the reaction (2S,6S)-2,6-diaminopimelate + 2-oxoglutarate = (S)-2,3,4,5-tetrahydrodipicolinate + L-glutamate + H2O + H(+). The protein operates within amino-acid biosynthesis; L-lysine biosynthesis via DAP pathway; LL-2,6-diaminopimelate from (S)-tetrahydrodipicolinate (aminotransferase route): step 1/1. Functionally, involved in the synthesis of meso-diaminopimelate (m-DAP or DL-DAP), required for both lysine and peptidoglycan biosynthesis. Catalyzes the direct conversion of tetrahydrodipicolinate to LL-diaminopimelate. In Lachnospira eligens (strain ATCC 27750 / DSM 3376 / VPI C15-48 / C15-B4) (Eubacterium eligens), this protein is LL-diaminopimelate aminotransferase.